A 325-amino-acid chain; its full sequence is Biotin synthase (325 aa).

One can recognise a Radical SAM core domain in the interval 43 to 262 (CSVETAQLLS…VAVARLLMPR (220 aa)). Positions 58, 62, and 65 each coordinate [4Fe-4S] cluster. [2Fe-2S] cluster is bound by residues C102, C133, C193, and R266.

This sequence belongs to the radical SAM superfamily. Biotin synthase family. In terms of assembly, homodimer. It depends on [4Fe-4S] cluster as a cofactor. [2Fe-2S] cluster serves as cofactor.

The enzyme catalyses (4R,5S)-dethiobiotin + (sulfur carrier)-SH + 2 reduced [2Fe-2S]-[ferredoxin] + 2 S-adenosyl-L-methionine = (sulfur carrier)-H + biotin + 2 5'-deoxyadenosine + 2 L-methionine + 2 oxidized [2Fe-2S]-[ferredoxin]. Its pathway is cofactor biosynthesis; biotin biosynthesis; biotin from 7,8-diaminononanoate: step 2/2. In terms of biological role, catalyzes the conversion of dethiobiotin (DTB) to biotin by the insertion of a sulfur atom into dethiobiotin via a radical-based mechanism. The protein is Biotin synthase of Azorhizobium caulinodans (strain ATCC 43989 / DSM 5975 / JCM 20966 / LMG 6465 / NBRC 14845 / NCIMB 13405 / ORS 571).